We begin with the raw amino-acid sequence, 227 residues long: Cytidylate kinase (227 aa).

Glycine 11–threonine 19 contributes to the ATP binding site.

Belongs to the cytidylate kinase family. Type 1 subfamily.

It localises to the cytoplasm. The catalysed reaction is CMP + ATP = CDP + ADP. The enzyme catalyses dCMP + ATP = dCDP + ADP. The sequence is that of Cytidylate kinase from Pasteurella multocida (strain Pm70).